The following is a 255-amino-acid chain: Type III pantothenate kinase (255 aa).

6–13 (DVGNTHIV) is a binding site for ATP. Residues tyrosine 100 and 107-110 (GADR) each bind substrate. Aspartate 109 (proton acceptor) is an active-site residue. Position 129 (aspartate 129) interacts with K(+). Position 132 (threonine 132) interacts with ATP. Threonine 184 contacts substrate.

Belongs to the type III pantothenate kinase family. In terms of assembly, homodimer. NH4(+) is required as a cofactor. Requires K(+) as cofactor.

The protein localises to the cytoplasm. It catalyses the reaction (R)-pantothenate + ATP = (R)-4'-phosphopantothenate + ADP + H(+). The protein operates within cofactor biosynthesis; coenzyme A biosynthesis; CoA from (R)-pantothenate: step 1/5. Functionally, catalyzes the phosphorylation of pantothenate (Pan), the first step in CoA biosynthesis. This Ruminiclostridium cellulolyticum (strain ATCC 35319 / DSM 5812 / JCM 6584 / H10) (Clostridium cellulolyticum) protein is Type III pantothenate kinase.